Here is a 433-residue protein sequence, read N- to C-terminus: Enolase (433 aa).

Glutamine 167 is a (2R)-2-phosphoglycerate binding site. Glutamate 209 acts as the Proton donor in catalysis. Mg(2+) is bound by residues aspartate 246, glutamate 291, and aspartate 318. Lysine 343, arginine 372, serine 373, and lysine 394 together coordinate (2R)-2-phosphoglycerate. The Proton acceptor role is filled by lysine 343.

This sequence belongs to the enolase family. As to quaternary structure, component of the RNA degradosome, a multiprotein complex involved in RNA processing and mRNA degradation. The cofactor is Mg(2+).

The protein localises to the cytoplasm. The protein resides in the secreted. It localises to the cell surface. It carries out the reaction (2R)-2-phosphoglycerate = phosphoenolpyruvate + H2O. It participates in carbohydrate degradation; glycolysis; pyruvate from D-glyceraldehyde 3-phosphate: step 4/5. In terms of biological role, catalyzes the reversible conversion of 2-phosphoglycerate (2-PG) into phosphoenolpyruvate (PEP). It is essential for the degradation of carbohydrates via glycolysis. This is Enolase from Tolumonas auensis (strain DSM 9187 / NBRC 110442 / TA 4).